Consider the following 630-residue polypeptide: MANSGTGAPPPLLLLPLLLLLGTGLLPASSHIETRAHAEERLLKRLFSGYNKWSRPVANISDVVLVRFGLSIAQLIDVDEKNQMMTTNVWVKQEWHDYKLRWDPGDYENVTSIRIPSELIWRPDIVLYNNADGDFAVTHLTKAHLFYDGRVQWTPPAIYKSSCSIDVTFFPFDQQNCTMKFGSWTYDKAKIDLVSMHSRVDQLDFWESGEWVIVDAVGTYNTRKYECCAEIYPDITYAFIIRRLPLFYTINLIIPCLLISCLTVLVFYLPSECGEKVTLCISVLLSLTVFLLLITEIIPSPTSLVIPLIGEYLLFTMIFVTLSIVITVFVLNVHHRSPRTHTMPAWVRRVFLDIVPRLLFMKRPSVVKDNCRRLIESMHKMANAPRFWPEPVGEPGILSDICNQGLSPAPTFCNPTDTAVETQPTCRSPPLEVPDLKTSEVEKASPCPSPGSCPPPKSSSGAPMLIKARSLSVQHVPSSQEAAEDGIRCRSRSIQYCVSQDGAASLADSKPTSSPTSLKARPSQLPVSDQASPCKCTCKEPSPVSPVTVLKAGGTKAPPQHLPLSPALTRAVEGVQYIADHLKAEDTDFSVKEDWKYVAMVIDRIFLWMFIIVCLLGTVGLFLPPWLAAC.

The signal sequence occupies residues 1–30; the sequence is MANSGTGAPPPLLLLPLLLLLGTGLLPASS. Over 32-249 the chain is Extracellular; that stretch reads IETRAHAEER…IIRRLPLFYT (218 aa). Asparagine 59 carries an N-linked (GlcNAc...) asparagine glycan. Positions 78 and 80 each coordinate Ca(2+). N-linked (GlcNAc...) asparagine glycosylation is found at asparagine 109 and asparagine 176. 2 disulfide bridges follow: cysteine 163-cysteine 177 and cysteine 227-cysteine 228. The helical transmembrane segment at 250-270 threads the bilayer; the sequence is INLIIPCLLISCLTVLVFYLP. Cysteine 273 carries the S-palmitoyl cysteine lipid modification. 2 helical membrane-spanning segments follow: residues 279–299 and 313–333; these read LCIS…EIIP and LLFT…VLNV. The Cytoplasmic portion of the chain corresponds to 334 to 604; sequence HHRSPRTHTM…WKYVAMVIDR (271 aa). Disordered regions lie at residues 418–463 and 505–526; these read TAVE…SGAP and SLAD…SQLP. At serine 428 the chain carries Phosphoserine. Residues 434–443 show a composition bias toward basic and acidic residues; that stretch reads PDLKTSEVEK. Residues 447–457 show a composition bias toward pro residues; sequence CPSPGSCPPPK. Phosphoserine is present on residues serine 542 and serine 545. A helical membrane pass occupies residues 605–625; the sequence is IFLWMFIIVCLLGTVGLFLPP.

This sequence belongs to the ligand-gated ion channel (TC 1.A.9) family. Acetylcholine receptor (TC 1.A.9.1) subfamily. Alpha-4/CHRNA4 sub-subfamily. In terms of assembly, neuronal AChR is composed of two different types of subunits: alpha and beta. CHRNA4 forms heteropentameric neuronal acetylcholine receptors with CHRNB2 and CHRNB4, as well as CHRNA5 and CHRNB3 as accesory subunits. Found in two major stoichiometric forms, LS (low agonist sensitivity): (CHRNA4)3:(CHRNB2)2 and HS (high agonist sensitivity): (CHRNA4)2:(CHRNB2)3, the two stoichiometric forms differ in their unitary conductance, calcium permeability, ACh sensitivity and potentiation by divalent cation. Cells produce predominantly an (CHRNA4)3:(CHRNB2)2 nAChR. The (CHRNA4)2:(CHRNB2)3 expression is selectively up-regulated by nicotine and has lower single channel conductance and calcium permeability. In the striatum, also forms CHRNA4:CHRNA6:CHRNB2 complexes. Also found in the stoichiometric form: (CHRNA4:CHRNB2)2:CHRNB3. Interacts with RIC3; which is required for proper folding and assembly. Interacts with LYPD6. As to expression, in various regions of the central nervous system. Expressed in hippocampal neurons.

It is found in the presynaptic cell membrane. The protein resides in the cell membrane. The catalysed reaction is Ca(2+)(in) = Ca(2+)(out). It carries out the reaction K(+)(in) = K(+)(out). It catalyses the reaction Na(+)(in) = Na(+)(out). Its activity is regulated as follows. Activated by a myriad of ligands such as acetylcholine, cytisine, nicotine, choline and epibatidine. Channel potentiation by calcium is stoichiometry-selective, CHRNA4:CHRNB2 nACh receptor is achieved by calcium association with topographically distinct sites framed by anionic residues within the CHRNA4 subunit and between the CHRNA4 and CHRNB2 subunits. nAChR activity is inhibited by the antagonist alpha-conotoxins BuIA, PnIA, GID and MII, small disulfide-constrained peptides from cone snails. Its function is as follows. Component of neuronal acetylcholine receptors (nAChRs) that function as pentameric, ligand-gated cation channels with high calcium permeability among other activities. nAChRs are excitatory neurotrasnmitter receptors formed by a collection of nAChR subunits known to mediate synaptic transmission in the nervous system and the neuromuscular junction. Each nAchR subunit confers differential attributes to channel properties, including activation, deactivation and desensitization kinetics, pH sensitivity, cation permeability, and binding to allosteric modulators. CHRNA4 forms heteropentameric neuronal acetylcholine receptors with CHRNB2 and CHRNB4, as well as CHRNA5 and CHRNB3 as accesory subunits. Is the most abundant nAChR subtype expressed in the central nervous system. Found in two major stoichiometric forms,(CHRNA4)3:(CHRNB2)2 and (CHRNA4)2:(CHRNB2)3, the two stoichiometric forms differ in their unitary conductance, calcium permeability, ACh sensitivity and potentiation by divalent cation. Involved in the modulation of calcium-dependent signaling pathways, influences the release of neurotransmitters, including dopamine, glutamate and GABA. The sequence is that of Neuronal acetylcholine receptor subunit alpha-4 (Chrna4) from Rattus norvegicus (Rat).